The chain runs to 97 residues: Co-chaperonin GroES (97 aa).

Belongs to the GroES chaperonin family. As to quaternary structure, heptamer of 7 subunits arranged in a ring. Interacts with the chaperonin GroEL.

It is found in the cytoplasm. Together with the chaperonin GroEL, plays an essential role in assisting protein folding. The GroEL-GroES system forms a nano-cage that allows encapsulation of the non-native substrate proteins and provides a physical environment optimized to promote and accelerate protein folding. GroES binds to the apical surface of the GroEL ring, thereby capping the opening of the GroEL channel. This chain is Co-chaperonin GroES, found in Bifidobacterium longum (strain NCC 2705).